Reading from the N-terminus, the 188-residue chain is Elongation factor P-like protein (188 aa).

This sequence belongs to the elongation factor P family.

The chain is Elongation factor P-like protein from Xylella fastidiosa (strain M23).